We begin with the raw amino-acid sequence, 764 residues long: FAST kinase domain-containing protein 5, mitochondrial (764 aa).

Residues 1–27 constitute a mitochondrion transit peptide; it reads MAATLKSLKLVRYRAFCSPSAFGAVRS. S95 carries the post-translational modification Phosphoserine. K507 carries the N6-acetyllysine modification. An RAP domain is found at 697-757; it reads LAVQFTNRNQ…RLEKLAFLHE (61 aa).

It belongs to the FAST kinase family. Found in a complex with GRSF1, DDX28, DHX30 and FASTKD2. Associates with the 12S mitochondrial rRNA (12S mt-rRNA). Expression detected in spleen, thymus, testis, ovary, colon, heart, smooth muscle, kidney, brain, lung, liver and white adipose tissue with highest expression in heart, smooth muscle, liver and thyroid.

The protein resides in the mitochondrion matrix. Its subcellular location is the mitochondrion nucleoid. Plays an important role in the processing of non-canonical mitochondrial mRNA precursors. The sequence is that of FAST kinase domain-containing protein 5, mitochondrial (FASTKD5) from Homo sapiens (Human).